We begin with the raw amino-acid sequence, 354 residues long: Diaminopimelate epimerase, chloroplastic (354 aa).

A chloroplast-targeting transit peptide spans 1-44 (MSSATAAATATIAAAAAKLAATPAPAPSRRRLTLRGNPTARRCV). Residues Cys-142 and Cys-297 contribute to the active site.

The protein belongs to the diaminopimelate epimerase family.

It is found in the plastid. The protein localises to the chloroplast. It catalyses the reaction (2S,6S)-2,6-diaminopimelate = meso-2,6-diaminopimelate. The protein operates within amino-acid biosynthesis; L-lysine biosynthesis via DAP pathway; DL-2,6-diaminopimelate from LL-2,6-diaminopimelate: step 1/1. The chain is Diaminopimelate epimerase, chloroplastic (DAPF) from Oryza sativa subsp. japonica (Rice).